The sequence spans 501 residues: Endoglucanase 8 (501 aa).

Positions 1 to 35 are cleaved as a signal peptide; the sequence is MKPRSSRDGHNAAAAAALLLAALVLSGDVLPAVVA. Asp-95 (nucleophile) is an active-site residue. A glycan (N-linked (GlcNAc...) asparagine) is linked at Asn-298. The active site involves His-414. N-linked (GlcNAc...) asparagine glycosylation occurs at Asn-462. Residue Asp-465 is part of the active site. Asn-469 carries an N-linked (GlcNAc...) asparagine glycan. Residue Glu-474 is part of the active site.

It belongs to the glycosyl hydrolase 9 (cellulase E) family.

It is found in the secreted. It carries out the reaction Endohydrolysis of (1-&gt;4)-beta-D-glucosidic linkages in cellulose, lichenin and cereal beta-D-glucans.. This is Endoglucanase 8 from Oryza sativa subsp. japonica (Rice).